The sequence spans 910 residues: Staphylococcal nuclease domain-containing protein 1 (910 aa).

Ala-2 bears the N-acetylalanine mark. TNase-like domains follow at residues Thr-18–Glu-166, Lys-193–Asp-328, and Lys-341–Lys-496. Thr-103 bears the Phosphothreonine mark. Residue Lys-193 is modified to N6-acetyllysine. Position 240 is a phosphothreonine (Thr-240). Short sequence motifs (nuclear localization signal) lie at residues Arg-321 to Ile-325 and Lys-388 to Pro-392. Phosphoserine is present on Ser-426. A Glycyl lysine isopeptide (Lys-Gly) (interchain with G-Cter in SUMO2) cross-link involves residue Lys-513. Residues Gly-525–His-660 enclose the TNase-like 4 domain. Lys-641 is subject to N6-acetyllysine. Ser-645 bears the Phosphoserine mark. One can recognise a Tudor domain in the interval Ala-729 to Arg-787. At Thr-779 the chain carries Phosphothreonine. Ser-785 and Ser-909 each carry phosphoserine.

In terms of assembly, forms a ternary complex with STAT6 and POLR2A. Associates with the RNA-induced silencing complex (RISC). Interacts with the RISC components AGO2, FMR1 and TNRC6A. Interacts with GTF2E1 and GTF2E2. Interacts with PIM1. Interacts with STAT5. Interacts with SYT11 (via C2 2 domain); the interaction with SYT11 is direct. Phosphorylated by PIM1 in vitro. As to expression, in lactating cows highly expressed in mammary epithelial cells.

Its subcellular location is the cytoplasm. It localises to the nucleus. The protein resides in the melanosome. It catalyses the reaction Endonucleolytic cleavage to nucleoside 3'-phosphates and 3'-phosphooligonucleotide end-products.. Functionally, endonuclease that mediates miRNA decay of both protein-free and AGO2-loaded miRNAs. As part of its function in miRNA decay, regulates mRNAs involved in G1-to-S phase transition. Functions as a bridging factor between STAT6 and the basal transcription factor. Plays a role in PIM1 regulation of MYB activity. Functions as a transcriptional coactivator for STAT5. This chain is Staphylococcal nuclease domain-containing protein 1 (SND1), found in Bos taurus (Bovine).